A 507-amino-acid chain; its full sequence is ATP synthase subunit beta (507 aa).

The interval 1 to 22 is disordered; it reads MSGLASKAKSRVKSSKGKNSTN. ATP is bound at residue 183 to 190; the sequence is GGAGVGKT.

Belongs to the ATPase alpha/beta chains family. As to quaternary structure, F-type ATPases have 2 components, CF(1) - the catalytic core - and CF(0) - the membrane proton channel. CF(1) has five subunits: alpha(3), beta(3), gamma(1), delta(1), epsilon(1). CF(0) has three main subunits: a(1), b(2) and c(9-12). The alpha and beta chains form an alternating ring which encloses part of the gamma chain. CF(1) is attached to CF(0) by a central stalk formed by the gamma and epsilon chains, while a peripheral stalk is formed by the delta and b chains.

Its subcellular location is the cell inner membrane. It catalyses the reaction ATP + H2O + 4 H(+)(in) = ADP + phosphate + 5 H(+)(out). In terms of biological role, produces ATP from ADP in the presence of a proton gradient across the membrane. The catalytic sites are hosted primarily by the beta subunits. This Ehrlichia chaffeensis (strain ATCC CRL-10679 / Arkansas) protein is ATP synthase subunit beta.